A 972-amino-acid chain; its full sequence is Hyaluronan synthase (972 aa).

The tract at residues Lys152–Phe325 is A1. Positions Glu432–Phe604 are A2.

Belongs to the glycosyltransferase 2 family. CS/HAS subfamily. Mg(2+) serves as cofactor. It depends on Co(2+) as a cofactor.

Its subcellular location is the cell membrane. It catalyses the reaction [hyaluronan](n) + UDP-N-acetyl-alpha-D-glucosamine = N-acetyl-beta-D-glucosaminyl-(1-&gt;4)-[hyaluronan](n) + UDP + H(+). The enzyme catalyses N-acetyl-beta-D-glucosaminyl-(1-&gt;4)-[hyaluronan](n) + UDP-alpha-D-glucuronate = [hyaluronan](n+1) + UDP + H(+). The catalysed reaction is 3-O-(beta-D-GalNAc-(1-&gt;4)-beta-D-GlcA-(1-&gt;3)-beta-D-Gal-(1-&gt;3)-beta-D-Gal-(1-&gt;4)-beta-D-Xyl)-L-seryl-[protein] + UDP-alpha-D-glucuronate = 3-O-(beta-D-GlcA-(1-&gt;3)-beta-D-GalNAc-(1-&gt;4)-beta-D-GlcA-(1-&gt;3)-beta-D-Gal-(1-&gt;3)-beta-D-Gal-(1-&gt;4)-beta-D-Xyl)-L-seryl-[protein] + UDP + H(+). It carries out the reaction 3-O-{[beta-D-GalNAc-(1-&gt;4)-beta-D-GlcA-(1-&gt;3)](n)-beta-D-GalNAc-(1-&gt;4)-beta-D-GlcA-(1-&gt;3)-beta-D-Gal-(1-&gt;3)-beta-D-Gal-(1-&gt;4)-beta-D-Xyl}-L-seryl-[protein] + UDP-alpha-D-glucuronate = 3-O-{beta-D-GlcA-(1-&gt;3)-[beta-D-GalNAc-(1-&gt;4)-beta-D-GlcA-(1-&gt;3)](n)-beta-D-GalNAc-(1-&gt;4)-beta-D-GlcA-(1-&gt;3)-beta-D-Gal-(1-&gt;3)-beta-D-Gal-(1-&gt;4)-beta-D-Xyl}-L-seryl-[protein] + UDP + H(+). Functionally, catalyzes the polymerization of hyaluronan, a polysaccharide composed of a repeating disaccharide of N-acetylglucosamine (GlcNAc) and glucuronic acid (GlcUA) units. Each unit has the composition in beta-(1-&gt;4)-GlcUA-beta-(1-&gt;3)-GlcNAc. This is Hyaluronan synthase (hyaD) from Pasteurella multocida.